Here is a 448-residue protein sequence, read N- to C-terminus: MTLPAFKAYDIRGRVPDELNEDLARRIGVALAAQLDQGPVVLGHDVRLASPALQEALSAGLRASGREVIDIGLCGTEEVYFQTDHLKAAGGVMVTASHNPMDYNGMKLVREQARPISSDTGLFAIRDTVAADTAAAGEPTAAEHSRTDKTAYLEHLLSYVDRSTLKPLKLVVNAGNGGAGLIVDLLAPHLPFEFVRVFHEPDGNFPNGIPNPLLPENRDATAKAVKEHGADFGIAWDGDFDRCFFFDHTGRFIEGYYLVGLLAQAILAKQPGGKVVHDPRLTWNTVEMVEDAGGIPVLCKSGHAFIKEKMRSENAVYGGEMSAHHYFREFAYADSGMIPWLLIAELVSQSGRSLADLVEARMQKFPCSGEINFKVDDAKAAVARVMAHYGDQSPELDYTDGISADFGQWRFNLRSSNTEPLLRLNVETRGDAALLETRTQEISNLLRG.

Residue serine 97 is the Phosphoserine intermediate of the active site. Mg(2+)-binding residues include serine 97, aspartate 237, aspartate 239, and aspartate 241.

The protein belongs to the phosphohexose mutase family. It depends on Mg(2+) as a cofactor.

The catalysed reaction is alpha-D-glucose 1-phosphate = alpha-D-glucose 6-phosphate. It catalyses the reaction alpha-D-mannose 1-phosphate = D-mannose 6-phosphate. Its pathway is nucleotide-sugar biosynthesis; GDP-alpha-D-mannose biosynthesis; alpha-D-mannose 1-phosphate from D-fructose 6-phosphate: step 2/2. Its function is as follows. Involved in xanthan production. The polypeptide is Phosphohexose mutases (xanA) (Xanthomonas campestris pv. campestris (strain ATCC 33913 / DSM 3586 / NCPPB 528 / LMG 568 / P 25)).